The sequence spans 360 residues: DNA replication and repair protein RecF (360 aa).

30–37 (GANGSGKT) contributes to the ATP binding site.

This sequence belongs to the RecF family.

It is found in the cytoplasm. The RecF protein is involved in DNA metabolism; it is required for DNA replication and normal SOS inducibility. RecF binds preferentially to single-stranded, linear DNA. It also seems to bind ATP. The protein is DNA replication and repair protein RecF of Acinetobacter baumannii (strain AB307-0294).